The chain runs to 272 residues: Ribosomal RNA small subunit methyltransferase A (272 aa).

S-adenosyl-L-methionine-binding residues include histidine 11, leucine 13, glycine 38, glutamate 59, aspartate 84, and asparagine 109.

Belongs to the class I-like SAM-binding methyltransferase superfamily. rRNA adenine N(6)-methyltransferase family. RsmA subfamily.

The protein localises to the cytoplasm. It catalyses the reaction adenosine(1518)/adenosine(1519) in 16S rRNA + 4 S-adenosyl-L-methionine = N(6)-dimethyladenosine(1518)/N(6)-dimethyladenosine(1519) in 16S rRNA + 4 S-adenosyl-L-homocysteine + 4 H(+). In terms of biological role, specifically dimethylates two adjacent adenosines (A1518 and A1519) in the loop of a conserved hairpin near the 3'-end of 16S rRNA in the 30S particle. May play a critical role in biogenesis of 30S subunits. This Rippkaea orientalis (strain PCC 8801 / RF-1) (Cyanothece sp. (strain PCC 8801)) protein is Ribosomal RNA small subunit methyltransferase A.